The primary structure comprises 206 residues: uncharacterized protein (206 aa).

The region spanning 14–200 (QRLINQAVEI…TPVVVREGVG (187 aa)) is the YrdC-like domain.

The protein belongs to the SUA5 family.

This is an uncharacterized protein from Escherichia coli O6:H1 (strain CFT073 / ATCC 700928 / UPEC).